A 258-amino-acid polypeptide reads, in one-letter code: tRNA pseudouridine synthase A (258 aa).

D52 serves as the catalytic Nucleophile. Position 110 (Y110) interacts with substrate.

Belongs to the tRNA pseudouridine synthase TruA family. In terms of assembly, homodimer.

It catalyses the reaction uridine(38/39/40) in tRNA = pseudouridine(38/39/40) in tRNA. Functionally, formation of pseudouridine at positions 38, 39 and 40 in the anticodon stem and loop of transfer RNAs. The polypeptide is tRNA pseudouridine synthase A (Francisella tularensis subsp. holarctica (strain FTNF002-00 / FTA)).